Consider the following 545-residue polypeptide: Chaperonin GroEL (545 aa).

Residues 30-33, Lys51, 87-91, Gly415, and Asp495 contribute to the ATP site; these read TLGP and DGTTT.

It belongs to the chaperonin (HSP60) family. Forms a cylinder of 14 subunits composed of two heptameric rings stacked back-to-back. Interacts with the co-chaperonin GroES.

The protein resides in the cytoplasm. It carries out the reaction ATP + H2O + a folded polypeptide = ADP + phosphate + an unfolded polypeptide.. Functionally, together with its co-chaperonin GroES, plays an essential role in assisting protein folding. The GroEL-GroES system forms a nano-cage that allows encapsulation of the non-native substrate proteins and provides a physical environment optimized to promote and accelerate protein folding. This Shewanella oneidensis (strain ATCC 700550 / JCM 31522 / CIP 106686 / LMG 19005 / NCIMB 14063 / MR-1) protein is Chaperonin GroEL.